A 167-amino-acid chain; its full sequence is Ubiquitin-fold modifier-conjugating enzyme 1 (167 aa).

Residue Cys-116 is the Glycyl thioester intermediate of the active site.

This sequence belongs to the ubiquitin-conjugating enzyme family. UFC1 subfamily. In terms of assembly, interacts with UBA5 (via C-terminus). Interacts with UFL1. Interacts with UFM1.

Its function is as follows. E2-like enzyme which specifically catalyzes the second step in ufmylation. Accepts the ubiquitin-like modifier UFM1 from the E1 enzyme UBA5 and forms an intermediate with UFM1 via a thioester linkage. Ufmylation is involved in various processes, such as ribosome recycling, response to DNA damage, interferon response or reticulophagy (also called ER-phagy). This is Ubiquitin-fold modifier-conjugating enzyme 1 from Osmerus mordax (Rainbow smelt).